We begin with the raw amino-acid sequence, 429 residues long: ATP-sensitive inward rectifier potassium channel 12 (429 aa).

The Cytoplasmic portion of the chain corresponds to 1–76; that stretch reads MTAGRVNPYS…IADMFTTCVD (76 aa). The chain crosses the membrane as a helical span at residues 77-103; sequence IRWRYMLLLFSLAFLVSWLLFGLIFWL. Arginine 78 and arginine 80 together coordinate a 1,2-diacyl-sn-glycero-3-phospho-(1D-myo-inositol-4,5-bisphosphate). Residues 104–129 are Extracellular-facing; it reads IALIHGDLENPGGDDTFKPCVLQVNG. An intrachain disulfide couples cysteine 123 to cysteine 155. An intramembrane region (helical; Pore-forming) is located at residues 130-146; the sequence is FVAAFLFSIETQTTIGY. K(+) contacts are provided by threonine 143, isoleucine 144, glycine 145, and tyrosine 146. Residues 143-148 carry the Selectivity filter motif; sequence TIGYGF. Residues 147-155 are Extracellular-facing; that stretch reads GFRCVTEEC. A helical membrane pass occupies residues 156–183; sequence PLAVFMVVVQSIVGCIIDSFMIGAIMAK. Residues lysine 183 and lysine 188 each coordinate a 1,2-diacyl-sn-glycero-3-phospho-(1D-myo-inositol-4,5-bisphosphate). The Cytoplasmic portion of the chain corresponds to 184–429; sequence MARPKKRAQT…QRSYRRESEI (246 aa). The tract at residues 386-407 is disordered; that stretch reads RDEDEEDDDSRGLDDLSPDNRH. Basic and acidic residues predominate over residues 395 to 407; it reads SRGLDDLSPDNRH.

Belongs to the inward rectifier-type potassium channel family. As to quaternary structure, homotetramer.

Its subcellular location is the membrane. The protein localises to the cell membrane. It localises to the sarcolemma. The protein resides in the T-tubule. It catalyses the reaction K(+)(in) = K(+)(out). With respect to regulation, activated by phosphatidylinositol 4,5-bisphosphate (PtdIns(4,5)P2). PtdIns(4,5)P2 binding to the cytoplasmic side of the channel triggers a conformation change leading to channel opening. Inward rectifying potassium channel that probably participates in controlling the resting membrane potential in electrically excitable cells. Probably participates in establishing action potential waveform and excitability of neuronal and muscle tissues. Inward rectifier potassium channels are characterized by a greater tendency to allow potassium to flow into the cell rather than out of it. Their voltage dependence is regulated by the concentration of extracellular potassium; as external potassium is raised, the voltage range of the channel opening shifts to more positive voltages. The inward rectification is mainly due to the blockage of outward current by internal magnesium. This chain is ATP-sensitive inward rectifier potassium channel 12 (KCNJ12), found in Gallus gallus (Chicken).